Consider the following 946-residue polypeptide: Zinc finger CCCH-type antiviral protein 1 (946 aa).

Residues Met1–His254 form an N-terminal domain region. The Nuclear localization signal signature appears at Arg69 to Lys76. C3H1-type zinc fingers lie at residues Cys73–His86, Leu87–Leu113, Cys150–His172, and Ile173–Met194. 2 disordered regions span residues Asn221–Leu283 and Arg302–Phe354. The tract at residues Thr224–His254 is binding to EXOSC5. Over residues Ala242–Ser257 the composition is skewed to basic and acidic residues. Ser257 carries the post-translational modification Phosphoserine. Ser262 is subject to Phosphoserine; by GSK3-beta. Phosphoserine is present on residues Ser265, Ser269, and Ser273. Residue Thr277 is modified to Phosphothreonine. The Nuclear export signal signature appears at Leu283–Val290. A phosphoserine mark is found at Ser324 and Ser350. The short motif at Lys412 to Arg413 is the Nuclear localization signal element. Ser425 is modified (phosphoserine). Residues Asn461 to Pro491 form a disordered region. A compositionally biased stretch (polar residues) spans Gly466–Ser477. The residue at position 508 (Tyr508) is a Phosphotyrosine. The segment at Gly523–Ser570 is disordered. The segment covering Glu524–Asn533 has biased composition (polar residues). Ser553 bears the Phosphoserine mark. Residues Pro554 to Ser567 show a composition bias toward polar residues. 2 positions are modified to phosphoserine: Ser583 and Ser680. The 88-residue stretch at Phe684–Arg771 folds into the WWE domain. One can recognise a PARP catalytic domain in the interval Ser805–Lys946.

This sequence belongs to the ARTD/PARP family. Homodimer or homooligomer. Homooligomerization is essential for its antiviral activity. Interacts with EXOSC5. Interacts (via N-terminal domain) with DDX17 in an RNA-independent manner. Interacts with EXOSC3, EXOSC7, DCP2 and DCP1A. Interacts with PARN in an RNA-independent manner. Interacts with XRN1 in an RNA-dependent manner. Interacts (via N-terminal domain) with DHX30 (via N-terminus) in an RNA-independent manner. Isoform 2 interacts (via zinc-fingers) with RIGI in an RNA-dependent manner. Phosphorylation at Ser-273 is essential for sequential phosphorylation of Ser-269, Ser-265, Ser-262 and Ser-257 by GSK3-beta. Phosphorylation by GSK3-beta enhances its antiviral activity.

It localises to the cytoplasm. It is found in the nucleus. Its function is as follows. Antiviral protein which inhibits the replication of viruses by recruiting the cellular RNA degradation machineries to degrade the viral mRNAs. Binds to a ZAP-responsive element (ZRE) present in the target viral mRNA, recruits cellular poly(A)-specific ribonuclease PARN to remove the poly(A) tail, and the 3'-5' exoribonuclease complex exosome to degrade the RNA body from the 3'-end. It also recruits the decapping complex DCP1-DCP2 through RNA helicase p72 (DDX17) to remove the cap structure of the viral mRNA to initiate its degradation from the 5'-end. Its target viruses belong to families which include retroviridae: human immunodeficiency virus type 1 (HIV-1) and moloney and murine leukemia virus (MoMLV), filoviridae: ebola virus (EBOV) and marburg virus (MARV), togaviridae: sindbis virus (SINV) and Ross river virus (RRV). Specifically targets the multiply spliced but not unspliced or singly spliced HIV-1 mRNAs for degradation. Isoform 1 is a more potent viral inhibitor than isoform 2. Isoform 2 acts as a positive regulator of RIG-I signaling resulting in activation of the downstream effector IRF3 leading to the expression of type I IFNs and IFN stimulated genes (ISGs). This is Zinc finger CCCH-type antiviral protein 1 (Zc3hav1) from Mus musculus (Mouse).